A 364-amino-acid chain; its full sequence is Lipoyl synthase, chloroplastic (364 aa).

The transit peptide at 1-70 (MEQTLFNPSI…PNVKKPEWLR (70 aa)) directs the protein to the chloroplast. Positions 32–52 (STNSPSSNTKTTTVTVPSKKT) are enriched in low complexity. The tract at residues 32 to 64 (STNSPSSNTKTTTVTVPSKKTMGPYTGRDPNVK) is disordered. 7 residues coordinate [4Fe-4S] cluster: Cys95, Cys100, Cys106, Cys126, Cys130, Cys133, and Ser341. A Radical SAM core domain is found at 109–330 (GGGDGIATAT…KEYGESIGFR (222 aa)).

Belongs to the radical SAM superfamily. Lipoyl synthase family. It depends on [4Fe-4S] cluster as a cofactor.

The protein resides in the plastid. It is found in the chloroplast. The enzyme catalyses [[Fe-S] cluster scaffold protein carrying a second [4Fe-4S](2+) cluster] + N(6)-octanoyl-L-lysyl-[protein] + 2 oxidized [2Fe-2S]-[ferredoxin] + 2 S-adenosyl-L-methionine + 4 H(+) = [[Fe-S] cluster scaffold protein] + N(6)-[(R)-dihydrolipoyl]-L-lysyl-[protein] + 4 Fe(3+) + 2 hydrogen sulfide + 2 5'-deoxyadenosine + 2 L-methionine + 2 reduced [2Fe-2S]-[ferredoxin]. The protein operates within protein modification; protein lipoylation via endogenous pathway; protein N(6)-(lipoyl)lysine from octanoyl-[acyl-carrier-protein]: step 2/2. In terms of biological role, catalyzes the radical-mediated insertion of two sulfur atoms into the C-6 and C-8 positions of the octanoyl moiety bound to the lipoyl domains of lipoate-dependent enzymes, thereby converting the octanoylated domains into lipoylated derivatives. This Ricinus communis (Castor bean) protein is Lipoyl synthase, chloroplastic.